We begin with the raw amino-acid sequence, 146 residues long: Large ribosomal subunit protein uL15 (146 aa).

A compositionally biased stretch (basic and acidic residues) spans 1–13 (MKLHELKAAEGSR). The tract at residues 1–51 (MKLHELKAAEGSRKVRNRVGRGTSSGNGKTSGRGQKGQKARSGGGVRLGFE) is disordered. 2 stretches are compositionally biased toward gly residues: residues 23 to 35 (TSSG…GRGQ) and 42 to 51 (SGGGVRLGFE).

This sequence belongs to the universal ribosomal protein uL15 family. Part of the 50S ribosomal subunit.

Its function is as follows. Binds to the 23S rRNA. This Streptococcus pyogenes serotype M1 protein is Large ribosomal subunit protein uL15.